A 185-amino-acid chain; its full sequence is Ribosome maturation factor RimM (185 aa).

The region spanning 105-184 (KDEYYWKDII…IVVVDWEIYK (80 aa)) is the PRC barrel domain.

The protein belongs to the RimM family. As to quaternary structure, binds ribosomal protein uS19.

It is found in the cytoplasm. An accessory protein needed during the final step in the assembly of 30S ribosomal subunit, possibly for assembly of the head region. Essential for efficient processing of 16S rRNA. May be needed both before and after RbfA during the maturation of 16S rRNA. It has affinity for free ribosomal 30S subunits but not for 70S ribosomes. This chain is Ribosome maturation factor RimM, found in Blochmanniella floridana.